We begin with the raw amino-acid sequence, 154 residues long: Ribonuclease H (154 aa).

The RNase H type-1 domain maps to 3 to 144; it reads ELPVVSIFTD…ADQLARDGVA (142 aa). Positions 12, 50, 72, and 136 each coordinate Mg(2+).

Belongs to the RNase H family. Monomer. The cofactor is Mg(2+).

It localises to the cytoplasm. It carries out the reaction Endonucleolytic cleavage to 5'-phosphomonoester.. Its function is as follows. Endonuclease that specifically degrades the RNA of RNA-DNA hybrids. This Bradyrhizobium sp. (strain ORS 278) protein is Ribonuclease H.